Reading from the N-terminus, the 1055-residue chain is Putative helicase/primase complex protein (1055 aa).

This sequence belongs to the asfivirus F1055L family.

In terms of biological role, may be involved in DNA replication. This is Putative helicase/primase complex protein from Ornithodoros (relapsing fever ticks).